The following is a 923-amino-acid chain: Hexokinase-3 (923 aa).

Positions 1 to 18 (MDSIGSSGLRQGEETLSC) are enriched in polar residues. The tract at residues 1-30 (MDSIGSSGLRQGEETLSCSEEGLPGPSDSS) is disordered. 2 consecutive Hexokinase domains span residues 27-471 (SDSS…MVTA) and 477-912 (AAHR…LVTA). Residues 84–220 (HGTEQGDFVV…AYNIDVVAVV (137 aa)) form a hexokinase small subdomain 1 region. 95 to 102 (ELGATGAS) is a binding site for ATP. D-glucose 6-phosphate is bound at residue 95–104 (ELGATGASLR). Residues S168, 185 to 186 (TK), and 221 to 222 (ND) contribute to the D-glucose site. Positions 221-460 (NDTVGTMMGC…CDVSLIPSVD (240 aa)) are hexokinase large subdomain 1. The D-glucose 6-phosphate site is built by D222 and T245. Residues N248, E273, and 304-307 (QRFE) each bind D-glucose. 426-428 (GGR) serves as a coordination point for D-glucose 6-phosphate. ATP is bound by residues 438 to 439 (SV) and 542 to 547 (DLGGTN). The tract at residues 531-661 (DGSERGDFLA…AVELNVVAIV (131 aa)) is hexokinase small subdomain 2. 542 to 546 (DLGGT) lines the D-glucose 6-phosphate pocket. Residues 609–610 (SF), 626–627 (TK), and 662–663 (ND) each bind D-glucose. Positions 662–901 (NDTVGTMMSC…CVVTFLQSED (240 aa)) are hexokinase large subdomain 2. 2 residues coordinate D-glucose 6-phosphate: D663 and T686. T686 provides a ligand contact to ATP. Residues 688–689 (TN), E714, and E748 each bind D-glucose. Residues 753-754 (GM), 790-794 (TKFLS), and 869-873 (TLYKL) contribute to the ATP site. D-glucose 6-phosphate is bound by residues 867 to 869 (DGT) and S903.

The protein belongs to the hexokinase family.

The catalysed reaction is a D-hexose + ATP = a D-hexose 6-phosphate + ADP + H(+). It catalyses the reaction D-fructose + ATP = D-fructose 6-phosphate + ADP + H(+). It carries out the reaction D-glucose + ATP = D-glucose 6-phosphate + ADP + H(+). It functions in the pathway carbohydrate metabolism; hexose metabolism. The protein operates within carbohydrate degradation; glycolysis; D-glyceraldehyde 3-phosphate and glycerone phosphate from D-glucose: step 1/4. Hexokinase is an allosteric enzyme inhibited by its product D-glucose 6-phosphate. In terms of biological role, catalyzes the phosphorylation of hexose, such as D-glucose and D-fructose, to hexose 6-phosphate (D-glucose 6-phosphate and D-fructose 6-phosphate, respectively). Mediates the initial step of glycolysis by catalyzing phosphorylation of D-glucose to D-glucose 6-phosphate. In Homo sapiens (Human), this protein is Hexokinase-3.